Here is a 229-residue protein sequence, read N- to C-terminus: Large ribosomal subunit protein uL1 (229 aa).

The protein belongs to the universal ribosomal protein uL1 family. In terms of assembly, part of the 50S ribosomal subunit.

In terms of biological role, binds directly to 23S rRNA. The L1 stalk is quite mobile in the ribosome, and is involved in E site tRNA release. Functionally, protein L1 is also a translational repressor protein, it controls the translation of the L11 operon by binding to its mRNA. The chain is Large ribosomal subunit protein uL1 from Latilactobacillus sakei subsp. sakei (strain 23K) (Lactobacillus sakei subsp. sakei).